A 465-amino-acid chain; its full sequence is Ribosomal protein uS12 methylthiotransferase RimO (465 aa).

Residues 1 to 117 (MKVGFISLGC…IVDICEGMPP (117 aa)) enclose the MTTase N-terminal domain. Residues cysteine 10, cysteine 46, cysteine 80, cysteine 150, cysteine 154, and cysteine 157 each coordinate [4Fe-4S] cluster. The region spanning 136–369 (ATPRHFAYMK…AIQRKIARAR (234 aa)) is the Radical SAM core domain. The region spanning 371–442 (RGLVGKEVPV…DYDVVGTLLA (72 aa)) is the TRAM domain.

This sequence belongs to the methylthiotransferase family. RimO subfamily. It depends on [4Fe-4S] cluster as a cofactor.

It localises to the cytoplasm. It carries out the reaction L-aspartate(89)-[ribosomal protein uS12]-hydrogen + (sulfur carrier)-SH + AH2 + 2 S-adenosyl-L-methionine = 3-methylsulfanyl-L-aspartate(89)-[ribosomal protein uS12]-hydrogen + (sulfur carrier)-H + 5'-deoxyadenosine + L-methionine + A + S-adenosyl-L-homocysteine + 2 H(+). In terms of biological role, catalyzes the methylthiolation of an aspartic acid residue of ribosomal protein uS12. The protein is Ribosomal protein uS12 methylthiotransferase RimO of Solibacter usitatus (strain Ellin6076).